Consider the following 327-residue polypeptide: Putative gluconeogenesis factor (327 aa).

It belongs to the gluconeogenesis factor family.

The protein resides in the cytoplasm. Its function is as follows. Required for morphogenesis under gluconeogenic growth conditions. The chain is Putative gluconeogenesis factor (yjiF) from Lactococcus lactis subsp. lactis (strain IL1403) (Streptococcus lactis).